A 339-amino-acid chain; its full sequence is 5-dehydro-2-deoxygluconokinase (339 aa).

The protein belongs to the carbohydrate kinase PfkB family.

It carries out the reaction 5-dehydro-2-deoxy-D-gluconate + ATP = 6-phospho-5-dehydro-2-deoxy-D-gluconate + ADP + H(+). It functions in the pathway polyol metabolism; myo-inositol degradation into acetyl-CoA; acetyl-CoA from myo-inositol: step 5/7. Catalyzes the phosphorylation of 5-dehydro-2-deoxy-D-gluconate (2-deoxy-5-keto-D-gluconate or DKG) to 6-phospho-5-dehydro-2-deoxy-D-gluconate (DKGP). The polypeptide is 5-dehydro-2-deoxygluconokinase (Clostridium botulinum (strain Alaska E43 / Type E3)).